A 64-amino-acid polypeptide reads, in one-letter code: Prokaryotic ubiquitin-like protein Pup (64 aa).

The tract at residues 1 to 37 (MAQEQTKRGGGGGDDDDIAGSTAAGQERREKLTEETD) is disordered. Residues 21 to 58 (STAAGQERREKLTEETDDLLDEIDDVLEENAEDFVRAY) are ARC ATPase binding. A coiled-coil region spans residues 23-52 (AAGQERREKLTEETDDLLDEIDDVLEENAE). Gln-64 is modified (deamidated glutamine). An Isoglutamyl lysine isopeptide (Gln-Lys) (interchain with K-? in acceptor proteins) cross-link involves residue Gln-64.

Belongs to the prokaryotic ubiquitin-like protein family. Strongly interacts with the proteasome-associated ATPase ARC through a hydrophobic interface; the interacting region of Pup lies in its C-terminal half. There is one Pup binding site per ARC hexamer ring. In terms of processing, is modified by deamidation of its C-terminal glutamine to glutamate by the deamidase Dop, a prerequisite to the subsequent pupylation process.

It functions in the pathway protein degradation; proteasomal Pup-dependent pathway. Its function is as follows. Protein modifier that is covalently attached to lysine residues of substrate proteins, thereby targeting them for proteasomal degradation. The tagging system is termed pupylation. In Mycobacterium tuberculosis (strain ATCC 25177 / H37Ra), this protein is Prokaryotic ubiquitin-like protein Pup.